The following is a 471-amino-acid chain: ATP synthase subunit beta (471 aa).

An ATP-binding site is contributed by 156-163 (GGAGVGKT).

It belongs to the ATPase alpha/beta chains family. F-type ATPases have 2 components, CF(1) - the catalytic core - and CF(0) - the membrane proton channel. CF(1) has five subunits: alpha(3), beta(3), gamma(1), delta(1), epsilon(1). CF(0) has three main subunits: a(1), b(2) and c(9-12). The alpha and beta chains form an alternating ring which encloses part of the gamma chain. CF(1) is attached to CF(0) by a central stalk formed by the gamma and epsilon chains, while a peripheral stalk is formed by the delta and b chains.

It is found in the cell membrane. It carries out the reaction ATP + H2O + 4 H(+)(in) = ADP + phosphate + 5 H(+)(out). In terms of biological role, produces ATP from ADP in the presence of a proton gradient across the membrane. The catalytic sites are hosted primarily by the beta subunits. The sequence is that of ATP synthase subunit beta from Lawsonia intracellularis (strain PHE/MN1-00).